A 328-amino-acid polypeptide reads, in one-letter code: RING finger protein 175 (328 aa).

Helical transmembrane passes span methionine 51–valine 71, leucine 83–tryptophan 103, arginine 104–phenylalanine 121, alanine 149–phenylalanine 169, and glycine 180–isoleucine 200. An RING-type; atypical zinc finger spans residues cysteine 227 to lysine 277.

The protein resides in the membrane. The polypeptide is RING finger protein 175 (RNF175) (Homo sapiens (Human)).